The chain runs to 783 residues: Protein transport protein SEC23 B (783 aa).

Residues C59, C62, C81, and C84 each contribute to the Zn(2+) site. Positions 59 to 84 (CRICTAALNPFARVDFLAKIWICPIC) are zinc finger-like.

It belongs to the SEC23/SEC24 family. SEC23 subfamily. Component of the coat protein complex II (COPII), composed of at least five proteins: the Sec23/24 complex, the Sec13/31 complex and Sar1. Interacts with SEC24A.

The protein resides in the cytoplasmic vesicle. It localises to the COPII-coated vesicle membrane. It is found in the endoplasmic reticulum membrane. The protein localises to the membrane. Functionally, component of the coat protein complex II (COPII) which promotes the formation of transport vesicles from the endoplasmic reticulum (ER). The coat has two main functions, the physical deformation of the endoplasmic reticulum membrane into vesicles and the selection of cargo molecules. The protein is Protein transport protein SEC23 B of Arabidopsis thaliana (Mouse-ear cress).